We begin with the raw amino-acid sequence, 127 residues long: MLWPFRWVWWKRVLTSQTRAPAKPNPLTVPPTCTWWSLRKLPNPTKLDDDLKNLLDPNEVRARMLKSFGTENFTQPQPQPQALKTTTPVFGTSSGNLGSVLSGGGYHAGLKHHQSTVTRSTGEWVDR.

The interval 70 to 90 (TENFTQPQPQPQALKTTTPVF) is disordered.

It belongs to the adhesin P1 family.

The chain is Putative adhesin P1-like protein MPN_203 from Mycoplasma pneumoniae (strain ATCC 29342 / M129 / Subtype 1) (Mycoplasmoides pneumoniae).